The following is a 301-amino-acid chain: Oxygen-dependent coproporphyrinogen-III oxidase (301 aa).

Ser-90 contacts substrate. Residues His-94 and His-104 each contribute to the a divalent metal cation site. His-104 functions as the Proton donor in the catalytic mechanism. Substrate is bound at residue 106–108 (NVR). His-143 and His-173 together coordinate a divalent metal cation. Residues 238-273 (YVEFNLVWDRGTLFGLQSGGRTESILMSLPPVVKWR) form an important for dimerization region. 256–258 (GGR) lines the substrate pocket.

The protein belongs to the aerobic coproporphyrinogen-III oxidase family. As to quaternary structure, homodimer. Requires a divalent metal cation as cofactor.

The protein localises to the cytoplasm. The enzyme catalyses coproporphyrinogen III + O2 + 2 H(+) = protoporphyrinogen IX + 2 CO2 + 2 H2O. It participates in porphyrin-containing compound metabolism; protoporphyrin-IX biosynthesis; protoporphyrinogen-IX from coproporphyrinogen-III (O2 route): step 1/1. In terms of biological role, involved in the heme biosynthesis. Catalyzes the aerobic oxidative decarboxylation of propionate groups of rings A and B of coproporphyrinogen-III to yield the vinyl groups in protoporphyrinogen-IX. In Nitrosomonas europaea (strain ATCC 19718 / CIP 103999 / KCTC 2705 / NBRC 14298), this protein is Oxygen-dependent coproporphyrinogen-III oxidase.